The primary structure comprises 355 residues: Guanine nucleotide-binding protein G(i) subunit alpha-2 (355 aa).

Glycine 2 is lipidated: N-myristoyl glycine. A lipid anchor (S-palmitoyl cysteine) is attached at cysteine 3. In terms of domain architecture, G-alpha spans 32-355 (REVKLLLLGA…KNNLKDCGLF (324 aa)). Positions 35–48 (KLLLLGAGESGKST) are G1 motif. GTP is bound by residues 40-47 (GAGESGKS), 176-182 (LRTRVKT), 201-205 (DVGGQ), 270-273 (NKKD), and alanine 327. Residues serine 47 and threonine 182 each contribute to the Mg(2+) site. The tract at residues 174–182 (DVLRTRVKT) is G2 motif. The tract at residues 197-206 (FKMFDVGGQR) is G3 motif. Residues 266–273 (ILFLNKKD) are G4 motif. Residues 325–330 (TCATDT) are G5 motif.

It belongs to the G-alpha family. G(i/o/t/z) subfamily. G proteins are composed of 3 units; alpha, beta and gamma. The alpha chain contains the guanine nucleotide binding site.

The protein localises to the cytoplasm. It localises to the cytoskeleton. The protein resides in the microtubule organizing center. It is found in the centrosome. Its subcellular location is the cell membrane. Guanine nucleotide-binding proteins (G proteins) are involved as modulators or transducers in various transmembrane signaling systems. The G(i) proteins are involved in hormonal regulation of adenylate cyclase: they inhibit the cyclase in response to beta-adrenergic stimuli. May play a role in cell division. This is Guanine nucleotide-binding protein G(i) subunit alpha-2 (gnai2) from Oryzias latipes (Japanese rice fish).